Here is a 381-residue protein sequence, read N- to C-terminus: Succinyl-diaminopimelate desuccinylase (381 aa).

A Zn(2+)-binding site is contributed by His-72. Asp-74 is an active-site residue. Asp-105 is a binding site for Zn(2+). Glu-139 serves as the catalytic Proton acceptor. 3 residues coordinate Zn(2+): Glu-140, Glu-168, and His-354.

This sequence belongs to the peptidase M20A family. DapE subfamily. Homodimer. Requires Zn(2+) as cofactor. Co(2+) is required as a cofactor.

The catalysed reaction is N-succinyl-(2S,6S)-2,6-diaminopimelate + H2O = (2S,6S)-2,6-diaminopimelate + succinate. It participates in amino-acid biosynthesis; L-lysine biosynthesis via DAP pathway; LL-2,6-diaminopimelate from (S)-tetrahydrodipicolinate (succinylase route): step 3/3. Catalyzes the hydrolysis of N-succinyl-L,L-diaminopimelic acid (SDAP), forming succinate and LL-2,6-diaminopimelate (DAP), an intermediate involved in the bacterial biosynthesis of lysine and meso-diaminopimelic acid, an essential component of bacterial cell walls. This is Succinyl-diaminopimelate desuccinylase from Shewanella sp. (strain MR-7).